Consider the following 185-residue polypeptide: ATP-dependent protease subunit HslV (185 aa).

Thr-2 is a catalytic residue. 3 residues coordinate Na(+): Gly-157, Cys-160, and Thr-163.

It belongs to the peptidase T1B family. HslV subfamily. As to quaternary structure, a double ring-shaped homohexamer of HslV is capped on each side by a ring-shaped HslU homohexamer. The assembly of the HslU/HslV complex is dependent on binding of ATP.

The protein localises to the cytoplasm. The catalysed reaction is ATP-dependent cleavage of peptide bonds with broad specificity.. Its activity is regulated as follows. Allosterically activated by HslU binding. Its function is as follows. Protease subunit of a proteasome-like degradation complex believed to be a general protein degrading machinery. This Vibrio cholerae serotype O1 (strain ATCC 39315 / El Tor Inaba N16961) protein is ATP-dependent protease subunit HslV.